The chain runs to 305 residues: Uridylate-specific endoribonuclease D (305 aa).

An N-terminal signal peptide occupies residues 1–17 (MKVYFVFLCLLPSLISG). The EndoU domain occupies 33 to 305 (SNAEIQSLAE…RYVASSYPNI (273 aa)). Residues histidine 182, histidine 197, and lysine 240 contribute to the active site. N-linked (GlcNAc...) asparagine glycosylation occurs at asparagine 288.

The protein belongs to the ENDOU family. In terms of assembly, monomer. Mn(2+) is required as a cofactor.

The protein resides in the secreted. The catalysed reaction is ribonucleotidyl-uridine-RNA = a 5'-end dephospho-uridine-RNA + a 3'-end 2',3'-cyclophospho-ribonucleotide-RNA. In terms of biological role, endoribonuclease that cleaves single-stranded RNAs at 5' of uridylates and releases a product with a 2',3'-cyclic phosphate at the 3'-end. The chain is Uridylate-specific endoribonuclease D (endou-d) from Xenopus laevis (African clawed frog).